The sequence spans 400 residues: Capsid protein (400 aa).

Over residues 1-10 the composition is skewed to polar residues; it reads MDPNLDQDTL. The tract at residues 1–54 is disordered; sequence MDPNLDQDTLPTHEEIDNDVDSAEEEPPEPPLLPDDIDDDDSHGSRTRRQVKPP. Acidic residues predominate over residues 16–28; it reads IDNDVDSAEEEPP.

It belongs to the potexvirus capsid protein family.

Its subcellular location is the virion. Functionally, required for genome encapsidation. This is Capsid protein (ORF3) from Botryotinia fuckeliana (Noble rot fungus).